A 394-amino-acid polypeptide reads, in one-letter code: Flap endonuclease 1 (394 aa).

Residues 1–104 (MGIKQLFSVI…GELAKRFQRK (104 aa)) form an N-domain region. Mg(2+) is bound at residue Asp-34. Residues Arg-47 and Arg-70 each coordinate DNA. Residues Asp-86, Glu-158, Glu-160, Asp-179, and Asp-181 each contribute to the Mg(2+) site. The interval 122–253 (DVEKFSRRTV…STALKLIREH (132 aa)) is I-domain. Glu-158 contributes to the DNA binding site. Residues Gly-231 and Asp-233 each contribute to the DNA site. Asp-233 is a binding site for Mg(2+). Residues 341-349 (QQARIEGFF) are interaction with PCNA. A compositionally biased stretch (basic and acidic residues) spans 356 to 383 (EEEKKAHKRKLEEQAEQKRKKVKEEKKE). The interval 356–394 (EEEKKAHKRKLEEQAEQKRKKVKEEKKEKAKLKAKPRGA) is disordered. Positions 384–394 (KAKLKAKPRGA) are enriched in basic residues.

It belongs to the XPG/RAD2 endonuclease family. FEN1 subfamily. Interacts with PCNA. Three molecules of dnr-8/fen1 bind to one PCNA trimer with each molecule binding to one PCNA monomer. PCNA stimulates the nuclease activity without altering cleavage specificity. Requires Mg(2+) as cofactor. Post-translationally, phosphorylated. Phosphorylation upon DNA damage induces relocalization to the nuclear plasma.

It localises to the nucleus. The protein resides in the nucleolus. It is found in the nucleoplasm. Its subcellular location is the mitochondrion. In terms of biological role, structure-specific nuclease with 5'-flap endonuclease and 5'-3' exonuclease activities involved in DNA replication and repair. During DNA replication, cleaves the 5'-overhanging flap structure that is generated by displacement synthesis when DNA polymerase encounters the 5'-end of a downstream Okazaki fragment. It enters the flap from the 5'-end and then tracks to cleave the flap base, leaving a nick for ligation. Also involved in the long patch base excision repair (LP-BER) pathway, by cleaving within the apurinic/apyrimidinic (AP) site-terminated flap. Acts as a genome stabilization factor that prevents flaps from equilibrating into structures that lead to duplications and deletions. Also possesses 5'-3' exonuclease activity on nicked or gapped double-stranded DNA, and exhibits RNase H activity. Also involved in replication and repair of rDNA and in repairing mitochondrial DNA. In Neurospora crassa (strain ATCC 24698 / 74-OR23-1A / CBS 708.71 / DSM 1257 / FGSC 987), this protein is Flap endonuclease 1 (dnr-8).